We begin with the raw amino-acid sequence, 627 residues long: Chaperone protein DnaK (627 aa).

Threonine 197 carries the post-translational modification Phosphothreonine; by autocatalysis. Polar residues predominate over residues glutamate 602–valine 611. The segment at glutamate 602–lysine 627 is disordered. The span at asparagine 612–lysine 627 shows a compositional bias: basic and acidic residues.

It belongs to the heat shock protein 70 family.

Its function is as follows. Acts as a chaperone. The polypeptide is Chaperone protein DnaK (Rickettsia felis (strain ATCC VR-1525 / URRWXCal2) (Rickettsia azadi)).